We begin with the raw amino-acid sequence, 163 residues long: Developmental pluripotency-associated protein 3 (163 aa).

In terms of tissue distribution, preferentially expressed in oocyte.

Its subcellular location is the nucleus. It is found in the cytoplasm. In terms of biological role, primordial germ cell (PGCs)-specific protein involved in epigenetic chromatin reprogramming in the zygote following fertilization. In zygotes, DNA demethylation occurs selectively in the paternal pronucleus before the first cell division, while the adjacent maternal pronucleus and certain paternally-imprinted loci are protected from this process. Participates in protection of DNA methylation in the maternal pronucleus by preventing conversion of 5mC to 5hmC: specifically recognizes and binds histone H3 dimethylated at 'Lys-9' (H3K9me2) on maternal genome, and protects maternal genome from TET3-mediated conversion to 5hmC and subsequent DNA demethylation. Does not bind paternal chromatin, which is mainly packed into protamine and does not contain much H3K9me2 mark. Also protects imprinted loci that are marked with H3K9me2 in mature sperm from DNA demethylation in early embryogenesis. May be important for the totipotent/pluripotent states continuing through preimplantation development. Also involved in chromatin condensation in oocytogenesis. The chain is Developmental pluripotency-associated protein 3 (DPPA3) from Bos taurus (Bovine).